We begin with the raw amino-acid sequence, 232 residues long: MKKAVVVFSGGQDSTTCLVQALKEFDEVHAITFDYGQRHKLEIEVAEKVAKDLGVAAHKVMDVGLLNELAISSLTRDDIPVSHELQENGLPNSFVPGRNILFLTLAGIYAYQIGAETVITGVCETDFSGYPDCRDDFVKAMNSALVKGMDRQFEIKTPLMWLNKAETWALADQYDALQLVRESTLTCYNGIIGDGCGDCPSCDLRKAGLDDYLNNKDAVMQSLIQKQKSEDQ.

ATP is bound at residue Phe-8–Leu-18. Zn(2+)-binding residues include Cys-187, Cys-196, Cys-199, and Cys-202.

The protein belongs to the QueC family. It depends on Zn(2+) as a cofactor.

It carries out the reaction 7-carboxy-7-deazaguanine + NH4(+) + ATP = 7-cyano-7-deazaguanine + ADP + phosphate + H2O + H(+). Its pathway is purine metabolism; 7-cyano-7-deazaguanine biosynthesis. Its function is as follows. Catalyzes the ATP-dependent conversion of 7-carboxy-7-deazaguanine (CDG) to 7-cyano-7-deazaguanine (preQ(0)). This Vibrio campbellii (strain ATCC BAA-1116) protein is 7-cyano-7-deazaguanine synthase.